A 208-amino-acid polypeptide reads, in one-letter code: Sodium/potassium-transporting ATPase subunit beta-1-interacting protein 4 (208 aa).

Transmembrane regions (helical) follow at residues 10 to 30 (LILLCTLQLVAALERQVFDFL), 35 to 55 (APILANFLHIVATILGLFGTL), 62 to 82 (VIAYALWAAVWVTWNVFLICF), and 151 to 171 (ALQILLALLGFVYACYVTSVF).

It belongs to the NKAIN family. In terms of assembly, interacts with atp1b1 C-terminus.

The protein localises to the cell membrane. The sequence is that of Sodium/potassium-transporting ATPase subunit beta-1-interacting protein 4 (nkain4) from Xenopus tropicalis (Western clawed frog).